A 126-amino-acid chain; its full sequence is Ribosome-binding factor A (126 aa).

The protein belongs to the RbfA family. In terms of assembly, monomer. Binds 30S ribosomal subunits, but not 50S ribosomal subunits or 70S ribosomes.

The protein resides in the cytoplasm. Its function is as follows. One of several proteins that assist in the late maturation steps of the functional core of the 30S ribosomal subunit. Associates with free 30S ribosomal subunits (but not with 30S subunits that are part of 70S ribosomes or polysomes). Required for efficient processing of 16S rRNA. May interact with the 5'-terminal helix region of 16S rRNA. The protein is Ribosome-binding factor A of Clostridioides difficile (strain 630) (Peptoclostridium difficile).